A 198-amino-acid chain; its full sequence is Recombination protein RecR (198 aa).

The C4-type zinc finger occupies 57-72 (CSICGNLTESDPCAIC). Positions 80-175 (TTILVVEESK…KVTRLAHGLA (96 aa)) constitute a Toprim domain.

Belongs to the RecR family.

May play a role in DNA repair. It seems to be involved in an RecBC-independent recombinational process of DNA repair. It may act with RecF and RecO. This Lactococcus lactis subsp. cremoris (strain SK11) protein is Recombination protein RecR.